Consider the following 161-residue polypeptide: TM2 domain-containing protein DDB_G0278163 (161 aa).

The Cytoplasmic segment spans residues 1–24; the sequence is MGHHHHHHGGSGHHHHHHHHGSGH. A helical transmembrane segment spans residues 25–45; that stretch reads YGGGAVLVTPIVTPVPVVYGS. The Extracellular segment spans residues 46–54; it reads RSSSYCPKS. The region spanning 52–100 is the TM2 domain; that stretch reads PKSMTVAYVLWFFFGILGFHRLYLGRVGTFFLYFFTAGVFGLGWLFDAF. A helical transmembrane segment spans residues 55 to 75; the sequence is MTVAYVLWFFFGILGFHRLYL. Residues 76–80 lie on the Cytoplasmic side of the membrane; the sequence is GRVGT. The chain crosses the membrane as a helical span at residues 81–101; sequence FFLYFFTAGVFGLGWLFDAFY. Over 102–161 the chain is Extracellular; that stretch reads THKMVKHYNECEFTKSCVGQSPPATIPIYQSEGAYPTYQQVPQQPPQFYQPQQQQPQYQP. The interval 139-161 is disordered; that stretch reads YQQVPQQPPQFYQPQQQQPQYQP.

It belongs to the TM2 family.

It is found in the membrane. The polypeptide is TM2 domain-containing protein DDB_G0278163 (Dictyostelium discoideum (Social amoeba)).